The chain runs to 125 residues: Large ribosomal subunit protein bL12 (125 aa).

This sequence belongs to the bacterial ribosomal protein bL12 family. In terms of assembly, homodimer. Part of the ribosomal stalk of the 50S ribosomal subunit. Forms a multimeric L10(L12)X complex, where L10 forms an elongated spine to which 2 to 4 L12 dimers bind in a sequential fashion. Binds GTP-bound translation factors.

Its function is as follows. Forms part of the ribosomal stalk which helps the ribosome interact with GTP-bound translation factors. Is thus essential for accurate translation. The chain is Large ribosomal subunit protein bL12 from Helicobacter pylori (strain HPAG1).